We begin with the raw amino-acid sequence, 46 residues long: Escargot/snail protein homolog (46 aa).

3 consecutive C2H2-type zinc fingers follow at residues 1–4, 9–30, and 36–46; these read HIAH, CKCP…IRTH, and SVCQHCNRAFA.

It belongs to the snail C2H2-type zinc-finger protein family.

It localises to the nucleus. The protein is Escargot/snail protein homolog of Lithobius forficatus (Centipede).